The following is a 145-amino-acid chain: MKFNPFVTSDRSKNRKRHFNAPSHVRRKIMSSPLSKELRQKYNVRSMPIRKDDEVQVVRGHYKGQQIGKVVQVYRKKYVIYIERVQREKANGTTVHVGIHPSKVVITRLKLDKDRKKILERKAKSRQVGKEKGKYKEELIEKMQE.

Disordered stretches follow at residues 1 to 21 (MKFN…HFNA) and 122 to 145 (KAKS…KMQE). Residues lysine 136 and lysine 142 each participate in a glycyl lysine isopeptide (Lys-Gly) (interchain with G-Cter in SUMO2) cross-link.

The protein belongs to the universal ribosomal protein uL24 family.

The polypeptide is Ribosomal protein uL24-like (RPL26L1) (Homo sapiens (Human)).